The primary structure comprises 128 residues: Fruiting body differentiation protein 16 (128 aa).

An N-terminal signal peptide occupies residues 1–19; it reads MLFSHIVFVALSVFGLVQA.

Plays a role in the regulation of fruiting body development. This chain is Fruiting body differentiation protein 16, found in Flammulina velutipes (Agaricus velutipes).